Here is a 61-residue protein sequence, read N- to C-terminus: Probable tautomerase SMU_1087 (61 aa).

Catalysis depends on Pro2, which acts as the Proton acceptor; via imino nitrogen.

This sequence belongs to the 4-oxalocrotonate tautomerase family.

The protein is Probable tautomerase SMU_1087 of Streptococcus mutans serotype c (strain ATCC 700610 / UA159).